The sequence spans 275 residues: Hydroxyethylthiazole kinase (275 aa).

M50 contributes to the substrate binding site. R126 and S171 together coordinate ATP. Substrate is bound at residue A200.

It belongs to the Thz kinase family. Requires Mg(2+) as cofactor.

It catalyses the reaction 5-(2-hydroxyethyl)-4-methylthiazole + ATP = 4-methyl-5-(2-phosphooxyethyl)-thiazole + ADP + H(+). Its pathway is cofactor biosynthesis; thiamine diphosphate biosynthesis; 4-methyl-5-(2-phosphoethyl)-thiazole from 5-(2-hydroxyethyl)-4-methylthiazole: step 1/1. Catalyzes the phosphorylation of the hydroxyl group of 4-methyl-5-beta-hydroxyethylthiazole (THZ). The polypeptide is Hydroxyethylthiazole kinase (Acinetobacter baumannii (strain AB307-0294)).